A 451-amino-acid chain; its full sequence is UPF0210 protein APL_1491 (451 aa).

Belongs to the UPF0210 family. Homodimer.

In Actinobacillus pleuropneumoniae serotype 5b (strain L20), this protein is UPF0210 protein APL_1491.